A 166-amino-acid polypeptide reads, in one-letter code: Phospholipase A2 myotoxin inhibitor protein (166 aa).

Residues 1-19 (MRLILLSGLLLLGTFLANG) form the signal peptide. Residues 46–161 (LKYAFLTVHK…CDDNLLVVCE (116 aa)) form the C-type lectin domain. 2 cysteine pairs are disulfide-bonded: cysteine 83–cysteine 160 and cysteine 138–cysteine 152. A glycan (N-linked (GlcNAc...) asparagine) is linked at asparagine 122.

This sequence belongs to the alpha-type phospholipase A2 inhibitor family. Oligomer. Homotrimer; non-covalently linked. Glycosylated. The glycosylation has no role in the association of this PLI and PA2 enzyme. Expressed by the liver.

It is found in the secreted. Functionally, this phospholipase A2 inhibitor binds directly phospholipase A2 in the presence or absence of calcium. Has anti-enzymatic, anti-myotoxic, anti-edema inducing, anti-cytotoxic, anti-bactericidal, and anti-lethal properties against basic and acidic phospholipases A2 from Bothrops venoms. The sequence is that of Phospholipase A2 myotoxin inhibitor protein from Bothrops moojeni (Lance-headed viper).